Reading from the N-terminus, the 123-residue chain is Galanin peptides (123 aa).

A signal peptide spans 1-19 (MPRGSVLLLASLLLAAALS). The propeptide occupies 20 to 30 (ATLGLGSPVKE). Basic and acidic residues predominate over residues 53–66 (SFQDKHGLAGKREL). The disordered stretch occupies residues 53-79 (SFQDKHGLAGKRELEPEDEARPGSFDR). Alanine 61 bears the Alanine amide mark. Serine 116 carries the post-translational modification Phosphoserine.

It belongs to the galanin family.

Its subcellular location is the secreted. In terms of biological role, endocrine hormone of the central and peripheral nervous systems that binds and activates the G protein-coupled receptors GALR1, GALR2, and GALR3. This small neuropeptide may regulate diverse physiologic functions including contraction of smooth muscle of the gastrointestinal and genitourinary tract, growth hormone and insulin release and adrenal secretion. This Bos taurus (Bovine) protein is Galanin peptides (GAL).